Here is a 195-residue protein sequence, read N- to C-terminus: MDRTTLPYGLFGLDIDPYKEFGATVELLSFLPSDFFPSVRDLLDTASALYRESLESSDHCSPHHTALRQAILCWGELMTLATWVGNNLEDPASRDLVVNYVNTNLGLKIRQLLWFHISCLTFGRETVLEYLVSFGVWIRTPPAYRPPNAPILSTLPETTVVRRRGRSPRRRTPSPRRRRSQSPRRRRSASPASQC.

The interval 148-195 (NAPILSTLPETTVVRRRGRSPRRRTPSPRRRRSQSPRRRRSASPASQC) is disordered. The span at 161-188 (VRRRGRSPRRRTPSPRRRRSQSPRRRRS) shows a compositional bias: basic residues. A phosphoserine; by host mark is found at Ser-167, Ser-174, and Ser-182. A 1; half-length repeat occupies 167–172 (SPRRRT). Positions 167 to 188 (SPRRRTPSPRRRRSQSPRRRRS) are 3 X 7 AA repeats of S-P-R-R-R-[PR]-S. Residues 170–187 (RRTPSPRRRRSQSPRRRR) carry the Bipartite nuclear localization signal motif. 2 repeat units span residues 174–180 (SPRRRRS) and 182–188 (SPRRRRS). The tract at residues 189–195 (ASPASQC) is RNA binding.

Belongs to the orthohepadnavirus core antigen family. As to quaternary structure, homodimerizes, then multimerizes. Interacts with cytosol exposed regions of viral L glycoprotein present in the reticulum-to-Golgi compartment. Interacts with human FLNB. Phosphorylated form interacts with host importin alpha; this interaction depends on the exposure of the NLS, which itself depends upon genome maturation and/or phosphorylation of the capsid protein. Interacts with host NUP153. In terms of processing, phosphorylated by host SRPK1, SRPK2, and maybe protein kinase C or GAPDH. Phosphorylation is critical for pregenomic RNA packaging. Protein kinase C phosphorylation is stimulated by HBx protein and may play a role in transport of the viral genome to the nucleus at the late step during the viral replication cycle.

It localises to the virion. The protein resides in the host cytoplasm. Its function is as follows. Self assembles to form an icosahedral capsid. Most capsids appear to be large particles with an icosahedral symmetry of T=4 and consist of 240 copies of capsid protein, though a fraction forms smaller T=3 particles consisting of 180 capsid proteins. Entering capsids are transported along microtubules to the nucleus. Phosphorylation of the capsid is thought to induce exposure of nuclear localization signal in the C-terminal portion of the capsid protein that allows binding to the nuclear pore complex via the importin (karyopherin-) alpha and beta. Capsids are imported in intact form through the nuclear pore into the nuclear basket, where it probably binds NUP153. Only capsids that contain the mature viral genome can release the viral DNA and capsid protein into the nucleoplasm. Immature capsids get stuck in the basket. Capsids encapsulate the pre-genomic RNA and the P protein. Pre-genomic RNA is reverse-transcribed into DNA while the capsid is still in the cytoplasm. The capsid can then either be directed to the nucleus, providing more genomes for transcription, or bud through the endoplasmic reticulum to provide new virions. The protein is Capsid protein of Hepatitis B virus genotype G (isolate United States/USG17/2002) (HBV-G).